Here is a 326-residue protein sequence, read N- to C-terminus: tRNA-modifying protein YgfZ (326 aa).

Residues W27 and W189 each coordinate folate.

This sequence belongs to the tRNA-modifying YgfZ family.

It localises to the cytoplasm. In terms of biological role, folate-binding protein involved in regulating the level of ATP-DnaA and in the modification of some tRNAs. It is probably a key factor in regulatory networks that act via tRNA modification, such as initiation of chromosomal replication. The chain is tRNA-modifying protein YgfZ from Shigella boydii serotype 18 (strain CDC 3083-94 / BS512).